The following is a 782-amino-acid chain: Host cell factor homolog hcf-1 (782 aa).

The interval 1–25 (MDEDVGLEATNYSRGDESRSEEQEK) is disordered. Positions 14–25 (RGDESRSEEQEK) are enriched in basic and acidic residues. Kelch repeat units follow at residues 55–103 (LIVI…SLGN), 105–151 (IYRF…RIGH), 161–222 (KAYV…IYEK), 227–271 (RMVV…PRSL), and 280–324 (KMFV…VPLH). Residues serine 423, serine 431, and serine 449 each carry the phosphoserine modification. The span at 423–434 (SPIKRATTSPRK) shows a compositional bias: polar residues. Residues 423 to 553 (SPIKRATTSP…EENGDDDLPW (131 aa)) are disordered. 2 stretches are compositionally biased toward polar residues: residues 456-469 (TAPSIISTQGTTYT) and 496-513 (TASPKRSNDAQSADSSTC). Serine 498 is modified (phosphoserine). The span at 537–552 (GETDEMKEENGDDDLP) shows a compositional bias: acidic residues.

Interacts with daf-16/FOXO. Interacts with deacetylase sir-2.1. Interacts with the 14-3-3 family proteins ftt-2 and par-5. Phosphorylated at multiple serine residues. Phosphorylation is developmentally regulated, occurring in embryos but not L1 larvae. Phosphorylation may be cell-cycle-regulated.

The protein resides in the nucleus. Its function is as follows. Transcriptional coregulator. Involved in control of the cell cycle and in modulating mitotic histone phosphorylation. Plays a role in modulating lifespan by regulating the transcriptional activity of daf-16/Forkhead box protein O, in concert with protein deacetylase sir-2.1/SIRT1, and perhaps acting independently of the Insulin/IGF-1-like signaling (IIS) mediated pathway. Negatively modulates responses to environmental stresses, including oxidative stress, heat stress, and exposure to heavy metals; acting via regulation of the transcription factors daf-16 and skn-1. May play a role in pharyngeal development via positive modulation of expression of sup-35. This chain is Host cell factor homolog hcf-1, found in Caenorhabditis elegans.